The primary structure comprises 39 residues: Bacteriocin lactococcin-G subunit alpha (39 aa).

Bacteriocin activity requires interaction of alpha and beta peptides in a molar ratio of 7:1 or 8:1 respectively.

Its function is as follows. Kills Lactococci. This chain is Bacteriocin lactococcin-G subunit alpha, found in Lactococcus lactis subsp. lactis (Streptococcus lactis).